We begin with the raw amino-acid sequence, 573 residues long: CTP synthase (573 aa).

Positions 1-281 (MGQTRIQART…DAYVVRRLGL (281 aa)) are amidoligase domain. Ser23 is a CTP binding site. Ser23 contacts UTP. ATP contacts are provided by residues 24-29 (SLGKGL) and Asp81. Residues Asp81 and Glu155 each coordinate Mg(2+). CTP contacts are provided by residues 162–164 (DIE), 202–207 (KTKPTQ), and Lys238. UTP is bound by residues 202-207 (KTKPTQ) and Lys238. A Glutamine amidotransferase type-1 domain is found at 306 to 554 (EVALVGKYVD…IAAALKYKLA (249 aa)). Position 369 (Gly369) interacts with L-glutamine. Cys396 functions as the Nucleophile; for glutamine hydrolysis in the catalytic mechanism. L-glutamine contacts are provided by residues 397–400 (LGLQ), Glu419, and Arg480. Catalysis depends on residues His527 and Glu529.

This sequence belongs to the CTP synthase family. Homotetramer.

The enzyme catalyses UTP + L-glutamine + ATP + H2O = CTP + L-glutamate + ADP + phosphate + 2 H(+). The catalysed reaction is L-glutamine + H2O = L-glutamate + NH4(+). It carries out the reaction UTP + NH4(+) + ATP = CTP + ADP + phosphate + 2 H(+). It functions in the pathway pyrimidine metabolism; CTP biosynthesis via de novo pathway; CTP from UDP: step 2/2. Its activity is regulated as follows. Allosterically activated by GTP, when glutamine is the substrate; GTP has no effect on the reaction when ammonia is the substrate. The allosteric effector GTP functions by stabilizing the protein conformation that binds the tetrahedral intermediate(s) formed during glutamine hydrolysis. Inhibited by the product CTP, via allosteric rather than competitive inhibition. Its function is as follows. Catalyzes the ATP-dependent amination of UTP to CTP with either L-glutamine or ammonia as the source of nitrogen. Regulates intracellular CTP levels through interactions with the four ribonucleotide triphosphates. The sequence is that of CTP synthase from Nocardia farcinica (strain IFM 10152).